We begin with the raw amino-acid sequence, 816 residues long: H(+)/Cl(-) exchange transporter 5 (816 aa).

Residues 1-124 are Cytoplasmic-facing; sequence MAMWQGAMDN…WALIHSVSDA (124 aa). 2 helical membrane-spanning segments follow: residues 125–162 and 208–231; these read FSGW…ICTG and VNYF…VKVF. The Selectivity filter part_1 signature appears at 237-241; the sequence is GSGIP. Residue S238 coordinates chloride. Positions 240–247 form an intramembrane region, helical; it reads IPEIKTIL. The next 2 helical transmembrane spans lie at 256-275 and 281-300; these read LGKW…VSSG and EGPL…HCFN. The Selectivity filter part_2 signature appears at 279-283; it reads GKEGP. 2 intramembrane regions (helical) span residues 312–324 and 328–336; these read VLSA…VSVA and PIGGVLFSL. 5 helical membrane-spanning segments follow: residues 348-366, 389-414, 422-442, 498-518, and 523-542; these read LWRS…RSIN, LVPF…IAWC, LGKY…ILAF, MWQL…TFGM, and GLFI…LGVG. Positions 523-527 match the Selectivity filter part_3 motif; sequence GLFIP. F525 serves as a coordination point for chloride. The segment at residues 570–584 is an intramembrane region (helical); the sequence is GLYAMVGAAACLGGV. The note=Loop between two helices intramembrane region spans 585 to 587; the sequence is TRM. The helical intramembrane region spans 588–599; that stretch reads TVSLVVIMFELT. Residues 600–604 constitute an intramembrane region (note=Loop between two helices); the sequence is GGLEY. A helical membrane pass occupies residues 605–622; it reads IVPLMAAAMTSKWVADAL. At 623-816 the chain is on the cytoplasmic side; the sequence is GREGIYDAHI…NQDPDSILFN (194 aa). Residue Y628 coordinates chloride. CBS domains lie at 656–720 and 752–812; these read MKPR…ARKK and ILDL…DPDS. Residues T666, 687-689, and 794-797 each bind ATP; these read YSG and TKKD.

Belongs to the chloride channel (TC 2.A.49) family. ClC-5/CLCN5 subfamily. In terms of assembly, interacts with NEDD4 and NEDD4L. Ubiquitinated by NEDD4L in the presence of albumin; which promotes endocytosis and proteasomal degradation.

The protein resides in the golgi apparatus membrane. The protein localises to the endosome membrane. It localises to the cell membrane. It carries out the reaction 2 chloride(in) + H(+)(out) = 2 chloride(out) + H(+)(in). Functionally, proton-coupled chloride transporter. Functions as antiport system and exchanges chloride ions against protons. Important for normal acidification of the endosome lumen. May play an important role in renal tubular function. The CLC channel family contains both chloride channels and proton-coupled anion transporters that exchange chloride or another anion for protons. The absence of conserved gating glutamate residues is typical for family members that function as channels. The polypeptide is H(+)/Cl(-) exchange transporter 5 (CLCN5) (Pongo abelii (Sumatran orangutan)).